The following is a 600-amino-acid chain: MNSLVRRKQVDSVHLIKNDGPHQLAKKLSAVDLVAIGVGTTIGAGVYILVGTVAREHTGPALAVSFFIAGVAAALSACCYAELASRCPSAGSAYHYAYICLGEGIAWLVGWALVLDYTIGGSAIARGITPNLASFFGGLDNLPVFLARQTIPGVGIVVDPCAALLIMIVTILLCFGIKESSTVQAIVTSVNVCTLVFIIVVGGYLACKTGWVGYDLPSGYFPFGLNGILAGSAVVFFSYIGFDTVTSTAEEVKNPQRDLPLGIGIALLICCILYMLLSVVIVGLVPYYSLNPDTPISSAFGDSGMQWAAYILTTGAITALCASLLGSLLAQPRIFMAMARDGLLPAFFSEISPRTQVPVKSTIAIGVLAAALAFFMDVAQLSEMVSVGTLMAFTAVAVCVLVLRYVPPDGVPLSSSSQTLSDTDESRAETENFLVDAIESSDSPLLGNETARDEKYFGKRRKIAAWSIALVCIGVLGLASAASAERLPSFPRFTICGVSAVILLGSLITLGYIDEDEERHNFGHKGGFLCPFVPYLPVLCILINTYLIINIGAGTWIRVLIWLLIGSMIYIFYGRSHSLLNNAVYVPTMTCTRKTTDHLA.

Residues 1–32 (MNSLVRRKQVDSVHLIKNDGPHQLAKKLSAVD) lie on the Cytoplasmic side of the membrane. A helical transmembrane segment spans residues 33–53 (LVAIGVGTTIGAGVYILVGTV). The Vacuolar portion of the chain corresponds to 54–60 (AREHTGP). A helical membrane pass occupies residues 61–81 (ALAVSFFIAGVAAALSACCYA). Topologically, residues 82 to 92 (ELASRCPSAGS) are cytoplasmic. Residues 93 to 115 (AYHYAYICLGEGIAWLVGWALVL) traverse the membrane as a helical segment. Residues 116-152 (DYTIGGSAIARGITPNLASFFGGLDNLPVFLARQTIP) are Vacuolar-facing. The chain crosses the membrane as a helical span at residues 153-173 (GVGIVVDPCAALLIMIVTILL). Residues 174-184 (CFGIKESSTVQ) are Cytoplasmic-facing. Residues 185-205 (AIVTSVNVCTLVFIIVVGGYL) form a helical membrane-spanning segment. Residues 206–220 (ACKTGWVGYDLPSGY) are Vacuolar-facing. Residues 221–241 (FPFGLNGILAGSAVVFFSYIG) traverse the membrane as a helical segment. The Cytoplasmic portion of the chain corresponds to 242–264 (FDTVTSTAEEVKNPQRDLPLGIG). Residues 265–285 (IALLICCILYMLLSVVIVGLV) form a helical membrane-spanning segment. The Vacuolar segment spans residues 286–308 (PYYSLNPDTPISSAFGDSGMQWA). The chain crosses the membrane as a helical span at residues 309–329 (AYILTTGAITALCASLLGSLL). Topologically, residues 330 to 360 (AQPRIFMAMARDGLLPAFFSEISPRTQVPVK) are cytoplasmic. A helical transmembrane segment spans residues 361-381 (STIAIGVLAAALAFFMDVAQL). S382 is a topological domain (vacuolar). The chain crosses the membrane as a helical span at residues 383–403 (EMVSVGTLMAFTAVAVCVLVL). At 404–462 (RYVPPDGVPLSSSSQTLSDTDESRAETENFLVDAIESSDSPLLGNETARDEKYFGKRRK) the chain is on the cytoplasmic side. The chain crosses the membrane as a helical span at residues 463-483 (IAAWSIALVCIGVLGLASAAS). Residues 484–492 (AERLPSFPR) lie on the Vacuolar side of the membrane. Residues 493 to 513 (FTICGVSAVILLGSLITLGYI) form a helical membrane-spanning segment. Topologically, residues 514 to 528 (DEDEERHNFGHKGGF) are cytoplasmic. A helical transmembrane segment spans residues 529 to 549 (LCPFVPYLPVLCILINTYLII). N550 is a topological domain (vacuolar). The helical transmembrane segment at 551–571 (IGAGTWIRVLIWLLIGSMIYI) threads the bilayer. Residues 572–600 (FYGRSHSLLNNAVYVPTMTCTRKTTDHLA) lie on the Cytoplasmic side of the membrane.

The protein belongs to the amino acid-polyamine-organocation (APC) superfamily. Cationic amino acid transporter (CAT) (TC 2.A.3.3) family. Expressed in roots, stems, flowers, and leaves.

The protein localises to the vacuole membrane. In terms of biological role, permease involved in the transport of the cationic amino acids. In Arabidopsis thaliana (Mouse-ear cress), this protein is Cationic amino acid transporter 4, vacuolar (CAT4).